A 226-amino-acid chain; its full sequence is Ribonuclease 3 (226 aa).

The region spanning 7–129 (DARLQQALGY…LFGAVFLDAG (123 aa)) is the RNase III domain. E42 serves as a coordination point for Mg(2+). Residue D46 is part of the active site. Mg(2+) is bound by residues D115 and E118. Residue E118 is part of the active site. In terms of domain architecture, DRBM spans 156–226 (DPKTRLQEIL…ARQACAELQR (71 aa)).

It belongs to the ribonuclease III family. As to quaternary structure, homodimer. Mg(2+) is required as a cofactor.

The protein localises to the cytoplasm. It carries out the reaction Endonucleolytic cleavage to 5'-phosphomonoester.. Digests double-stranded RNA. Involved in the processing of primary rRNA transcript to yield the immediate precursors to the large and small rRNAs (23S and 16S). Processes some mRNAs, and tRNAs when they are encoded in the rRNA operon. Processes pre-crRNA and tracrRNA of type II CRISPR loci if present in the organism. The polypeptide is Ribonuclease 3 (Thiobacillus denitrificans (strain ATCC 25259 / T1)).